The following is a 329-amino-acid chain: NTD biosynthesis operon regulator NtdR (329 aa).

An HTH lacI-type domain is found at 2-56 (PTIDEIAKLCNVSKTTVSRVLNNHPYVSKEKRDMILKAINELDYTPNYLARNFRR). A DNA-binding region (H-T-H motif) is located at residues 4–23 (IDEIAKLCNVSKTTVSRVLN).

Positively regulates the ntdABC operon and negatively regulates its own transcription. Binds to NTD to induce ntdABC transcription. The protein is NTD biosynthesis operon regulator NtdR (ntdR) of Bacillus subtilis (strain 168).